The primary structure comprises 475 residues: Coagulation factor X (475 aa).

The first 20 residues, 1-20, serve as a signal peptide directing secretion; that stretch reads MAGRLLLLLLCAALPDELRA. A propeptide spanning residues 21–40 is cleaved from the precursor; sequence EGGVFIKKESADKFLERTKR. One can recognise a Gla domain in the interval 41 to 85; that stretch reads ANSFLEEMKQGNIERECNEERCSKEEAREAFEDNEKTEEFWNIYV. 4-carboxyglutamate occurs at positions 46, 47, 54, 56, 59, 60, 65, 66, 69, 72, and 79. Cysteine 57 and cysteine 62 are disulfide-bonded. The 37-residue stretch at 86-122 folds into the EGF-like 1; calcium-binding domain; that stretch reads DGDQCSSNPCHYGGQCKDGLGSYTCSCLDGYQGKNCE. 11 cysteine pairs are disulfide-bonded: cysteine 90–cysteine 101, cysteine 95–cysteine 110, cysteine 112–cysteine 121, cysteine 129–cysteine 140, cysteine 136–cysteine 152, cysteine 154–cysteine 167, cysteine 175–cysteine 348, cysteine 247–cysteine 252, cysteine 267–cysteine 283, cysteine 396–cysteine 410, and cysteine 421–cysteine 449. Aspartate 103 is modified ((3R)-3-hydroxyaspartate). Residues 125-168 form the EGF-like 2 domain; the sequence is IPKYCKINNGDCEQFCSIKKSVQKDVVCSCTSGYELAEDGKQCV. A propeptide spans 186–240 (activation peptide); the sequence is SVILPTNSNTNATSDQDVPSTNGSILEEVFTTTTESPTPPPRNGSSITDPNVDTR. Asparagine 196, asparagine 207, and asparagine 228 each carry an N-linked (GlcNAc...) asparagine glycan. Residues 216–237 form a disordered region; sequence TTTTESPTPPPRNGSSITDPNV. One can recognise a Peptidase S1 domain in the interval 241–473; sequence IVGGDECRPG…FLRWVRTVMR (233 aa). Histidine 282 serves as the catalytic Charge relay system. Asparagine 285 carries an N-linked (GlcNAc...) asparagine glycan. The active-site Charge relay system is aspartate 328. The active-site Charge relay system is serine 425.

The protein belongs to the peptidase S1 family. As to quaternary structure, the two chains are formed from a single-chain precursor by the excision of two Arg residues and are held together by 1 or more disulfide bonds. The vitamin K-dependent, enzymatic carboxylation of some glutamate residues allows the modified protein to bind calcium. Post-translationally, the activation peptide is cleaved by factor IXa (in the intrinsic pathway), or by factor VIIa (in the extrinsic pathway). In terms of processing, the iron and 2-oxoglutarate dependent 3-hydroxylation of aspartate and asparagine is (R) stereospecific within EGF domains. As to expression, liver and chorioallantoic membrane.

The protein localises to the secreted. The catalysed reaction is Selective cleavage of Arg-|-Thr and then Arg-|-Ile bonds in prothrombin to form thrombin.. Functionally, factor Xa is a vitamin K-dependent glycoprotein that converts prothrombin to thrombin in the presence of factor Va, calcium and phospholipid during blood clotting. VAP cleaves the fusion proteins of Sendai virus, NDV, and influenza virus a at a specific single arginine-containing site, and plays a key role in the viral spreading in the allantoic sac. In Gallus gallus (Chicken), this protein is Coagulation factor X (F10).